Consider the following 509-residue polypeptide: ATP synthase subunit alpha (509 aa).

Position 169 to 176 (169 to 176 (GDRQTGKT)) interacts with ATP.

It belongs to the ATPase alpha/beta chains family. As to quaternary structure, F-type ATPases have 2 components, CF(1) - the catalytic core - and CF(0) - the membrane proton channel. CF(1) has five subunits: alpha(3), beta(3), gamma(1), delta(1), epsilon(1). CF(0) has three main subunits: a(1), b(2) and c(9-12). The alpha and beta chains form an alternating ring which encloses part of the gamma chain. CF(1) is attached to CF(0) by a central stalk formed by the gamma and epsilon chains, while a peripheral stalk is formed by the delta and b chains.

The protein localises to the cell inner membrane. It catalyses the reaction ATP + H2O + 4 H(+)(in) = ADP + phosphate + 5 H(+)(out). Functionally, produces ATP from ADP in the presence of a proton gradient across the membrane. The alpha chain is a regulatory subunit. The protein is ATP synthase subunit alpha of Sinorhizobium fredii (strain NBRC 101917 / NGR234).